A 251-amino-acid polypeptide reads, in one-letter code: Small ribosomal subunit protein uS2 (251 aa).

This sequence belongs to the universal ribosomal protein uS2 family.

The chain is Small ribosomal subunit protein uS2 from Synechococcus elongatus (strain ATCC 33912 / PCC 7942 / FACHB-805) (Anacystis nidulans R2).